A 342-amino-acid chain; its full sequence is Polygalacturonase inhibitor 1 (342 aa).

The N-terminal stretch at 1 to 29 is a signal peptide; it reads MTQFNIPVTMSSSLSIILVILVSLRTALS. 2 cysteine pairs are disulfide-bonded: cysteine 32-cysteine 62 and cysteine 63-cysteine 72. An N-linked (GlcNAc...) asparagine glycan is attached at asparagine 64. LRR repeat units lie at residues 82–107, 108–132, 133–156, 157–180, 181–205, 206–228, 229–252, 253–275, 276–299, and 300–319; these read NNLDLSGHNLPKPYPIPSSLANLPYL, NFLYIGGINNLVGPIPPAIAKLTQL, HYLYITHTNVSGAIPDFLSQIKTL, VTLDFSYNALSGTLPPSISSLPNL, GGITFDGNRISGAIPDSYGSFSKLF, TAMTISRNRLTGKIPPTFANLNL, AFVDLSRNMLEGDASVLFGSDKNT, KKIHLAKNSLAFDLGKVGLSKNL, NGLDLRNNRIYGTLPQGLTQLKFL, and QSLNVSFNNLCGEIPQGGNL. Asparagine 141 carries an N-linked (GlcNAc...) asparagine glycan. Residue asparagine 303 is glycosylated (N-linked (GlcNAc...) asparagine). 2 cysteine pairs are disulfide-bonded: cysteine 310-cysteine 332 and cysteine 334-cysteine 341.

Belongs to the polygalacturonase-inhibiting protein family.

The protein localises to the secreted. Its subcellular location is the cell wall. It is found in the membrane. Inhibitor of fungal polygalacturonase. It is an important factor for plant resistance to phytopathogenic fungi. Substrate preference is polygalacturonase (PG) from A.niger &gt;&gt; PG of F.oxysporum, A.solani or B.cinerea. Not active on PG from F.moniliforme. This chain is Polygalacturonase inhibitor 1 (PGIP1), found in Phaseolus vulgaris (Kidney bean).